The primary structure comprises 278 residues: uncharacterized protein (278 aa).

One can recognise a Response regulatory domain in the interval 1-55; that stretch reads MKIRERFSMVDLPVLIITAAIIGHDKYKAFHAGANDILQKPYHYSEFMARIQNLI.

This is an uncharacterized protein from Bacillus subtilis (strain 168).